Reading from the N-terminus, the 495-residue chain is MTGRCPTVAVVGAGMSGMCVAITLLSAGITDVCIYEKADDVGGTWRDNTYPGLTCDVPSRLYQYSFAKNPNWTQMFSRGGEIQDYLRGIAERYGLRHRIRFGATVVSARFDDGRWVLRTDSGTESTVDFLISATGVLHHPRIPPIAGLDDFRGTVFHSARWDHTVPLLGRRIAVIGTGSTGVQLVCGLAGVAGKVTMFQRTAQWVLPWPNPRYSKLARVFHRAFPCLGSLAYKAYSLSFETFAVALSNPGLHRKLVGAVCRASLRRVRDPRLRRALTPDYEPMCKRLVMSGGFYRAIQRDDVELVTAGIDHVEHRGIVTDDGVLHEVDVIVLATGFDSHAFFRPMQLTGRDGIRIDDVWQDGPHAHQTVAIPGFPNFFMMLGPHSPVGNFPLTAVAESQAEHIVQWIKRWRHGEFDTMEPKSAATEAYNTVLRAAMPNTVWTTGCDSWYLNKDGIPEVWPFAPAKHRAMLANLHPEEYDLRRYAAVRATSRPQSA.

FAD is bound by residues S16, E36, W45, D56, Y62, and V105.

Belongs to the FAD-binding monooxygenase family. FAD is required as a cofactor.

This is an uncharacterized protein from Mycobacterium tuberculosis (strain CDC 1551 / Oshkosh).